Here is a 301-residue protein sequence, read N- to C-terminus: Probable alpha-L-glutamate ligase (301 aa).

One can recognise an ATP-grasp domain in the interval Leu104–Glu287. Residues Lys141, Glu178 to Phe179, Asp187, and Arg211 to Asn213 contribute to the ATP site. Residues Asp248, Glu260, and Asn262 each contribute to the Mg(2+) site. The Mn(2+) site is built by Asp248, Glu260, and Asn262.

This sequence belongs to the RimK family. The cofactor is Mg(2+). Mn(2+) is required as a cofactor.

The polypeptide is Probable alpha-L-glutamate ligase (Marinobacter nauticus (strain ATCC 700491 / DSM 11845 / VT8) (Marinobacter aquaeolei)).